The chain runs to 215 residues: MSKVYDWFEERLEIQAIADDITSKYVPPHVNIFYCLGGITLTCFLVQIATGFAMTFYYRPTVTEAFSSVQYIMTEVNFGWLIRSVHRWSASMMVLVMILHVFRVYLTGGFKKPRELTWVTGVILAVLTVSFGVTGYSLPWDQIGYWAVKIVTGVPEAIPFIGSSLVELLRGSVSVGQSTLTRFYSLHTFVLPLLTAVFMLMHFLMIRKQGISGPL.

The helical transmembrane segment at 32–52 (IFYCLGGITLTCFLVQIATGF) threads the bilayer. Cysteine 35 is a heme c binding site. Heme b-binding residues include histidine 86 and histidine 100. The next 3 membrane-spanning stretches (helical) occupy residues 90 to 110 (ASMM…TGGF), 116 to 136 (LTWV…VTGY), and 186 to 206 (LHTF…FLMI). Histidine 187 and histidine 202 together coordinate heme b.

Belongs to the cytochrome b family. PetB subfamily. In terms of assembly, the 4 large subunits of the cytochrome b6-f complex are cytochrome b6, subunit IV (17 kDa polypeptide, PetD), cytochrome f and the Rieske protein, while the 4 small subunits are PetG, PetL, PetM and PetN. The complex functions as a dimer. Heme b serves as cofactor. Heme c is required as a cofactor.

The protein localises to the plastid. Its subcellular location is the chloroplast thylakoid membrane. Its function is as follows. Component of the cytochrome b6-f complex, which mediates electron transfer between photosystem II (PSII) and photosystem I (PSI), cyclic electron flow around PSI, and state transitions. This Adiantum capillus-veneris (Maidenhair fern) protein is Cytochrome b6.